The sequence spans 375 residues: Acetylornithine aminotransferase (375 aa).

Pyridoxal 5'-phosphate-binding positions include 93 to 94 and Phe-120; that span reads GT. Residue Arg-123 coordinates N(2)-acetyl-L-ornithine. 205 to 208 contacts pyridoxal 5'-phosphate; that stretch reads DEVQ. An N6-(pyridoxal phosphate)lysine modification is found at Lys-234. Residue Thr-262 participates in N(2)-acetyl-L-ornithine binding. A pyridoxal 5'-phosphate-binding site is contributed by Thr-263.

The protein belongs to the class-III pyridoxal-phosphate-dependent aminotransferase family. ArgD subfamily. Homodimer. Requires pyridoxal 5'-phosphate as cofactor.

It localises to the cytoplasm. The enzyme catalyses N(2)-acetyl-L-ornithine + 2-oxoglutarate = N-acetyl-L-glutamate 5-semialdehyde + L-glutamate. It participates in amino-acid biosynthesis; L-arginine biosynthesis; N(2)-acetyl-L-ornithine from L-glutamate: step 4/4. This is Acetylornithine aminotransferase from Staphylococcus epidermidis (strain ATCC 12228 / FDA PCI 1200).